The chain runs to 246 residues: Ribonuclease PH (246 aa).

Residues Arg91 and 129–131 contribute to the phosphate site; that span reads GTR.

The protein belongs to the RNase PH family. Homohexameric ring arranged as a trimer of dimers.

It carries out the reaction tRNA(n+1) + phosphate = tRNA(n) + a ribonucleoside 5'-diphosphate. Functionally, phosphorolytic 3'-5' exoribonuclease that plays an important role in tRNA 3'-end maturation. Removes nucleotide residues following the 3'-CCA terminus of tRNAs; can also add nucleotides to the ends of RNA molecules by using nucleoside diphosphates as substrates, but this may not be physiologically important. Probably plays a role in initiation of 16S rRNA degradation (leading to ribosome degradation) during starvation. This is Ribonuclease PH from Paraburkholderia phymatum (strain DSM 17167 / CIP 108236 / LMG 21445 / STM815) (Burkholderia phymatum).